A 97-amino-acid polypeptide reads, in one-letter code: MSSPSSESSNAKSSPPKEEYRTPGLRGVKTTTLFRAVNPELFIKPNKPVMVFGIVTITMCVAYIAYLHATEENKRELYEAVDSEGNRYTRRKSSKWD.

The span at 1-14 (MSSPSSESSNAKSS) shows a compositional bias: low complexity. The interval 1-26 (MSSPSSESSNAKSSPPKEEYRTPGLR) is disordered. The helical transmembrane segment at 49–69 (VMVFGIVTITMCVAYIAYLHA) threads the bilayer.

This sequence belongs to the SMIM8 family.

The protein localises to the membrane. The sequence is that of Small integral membrane protein 8 (smim8) from Xenopus tropicalis (Western clawed frog).